The following is a 39-amino-acid chain: Cytochrome b559 subunit beta (39 aa).

Residues 14–30 form a helical membrane-spanning segment; the sequence is WLAVHGLAIPTVFFLGS. His-18 contacts heme.

It belongs to the PsbE/PsbF family. As to quaternary structure, heterodimer of an alpha subunit and a beta subunit. PSII is composed of 1 copy each of membrane proteins PsbA, PsbB, PsbC, PsbD, PsbE, PsbF, PsbH, PsbI, PsbJ, PsbK, PsbL, PsbM, PsbT, PsbX, PsbY, PsbZ, Psb30/Ycf12, at least 3 peripheral proteins of the oxygen-evolving complex and a large number of cofactors. It forms dimeric complexes. It depends on heme b as a cofactor.

It is found in the plastid membrane. In terms of biological role, this b-type cytochrome is tightly associated with the reaction center of photosystem II (PSII). PSII is a light-driven water:plastoquinone oxidoreductase that uses light energy to abstract electrons from H(2)O, generating O(2) and a proton gradient subsequently used for ATP formation. It consists of a core antenna complex that captures photons, and an electron transfer chain that converts photonic excitation into a charge separation. In Cuscuta gronovii (Common dodder), this protein is Cytochrome b559 subunit beta.